A 385-amino-acid chain; its full sequence is Eukaryotic translation initiation factor 3 subunit M (385 aa).

Residues 180 to 342 (NSELASKVMI…RKVHISSTMH (163 aa)) form the PCI domain.

It belongs to the eIF-3 subunit M family. In terms of assembly, component of the eukaryotic translation initiation factor 3 (eIF-3) complex.

It localises to the cytoplasm. In terms of biological role, component of the eukaryotic translation initiation factor 3 (eIF-3) complex, which is involved in protein synthesis of a specialized repertoire of mRNAs and, together with other initiation factors, stimulates binding of mRNA and methionyl-tRNAi to the 40S ribosome. The eIF-3 complex specifically targets and initiates translation of a subset of mRNAs involved in cell proliferation. The sequence is that of Eukaryotic translation initiation factor 3 subunit M from Anopheles gambiae (African malaria mosquito).